The primary structure comprises 485 residues: MEIFDLTIHELHEKLKAKEVSSVEATRAMLDRIEAVDSQVNAYITVTPEQALVQAQDADRRIAAGEIAPLTGVPVGLKDIFVTKGIRTTCGSRILENFVPPYDGTAVAKLKEQGAVIVGKLNQDEFAMGSSNESSYFGPCRNPWDLSCTPGGSSGGSAAAIAARTATATLGTDTGGSIRQPASHCGCVGLKPTYGRVSRYGVIAYASSLDQVGPLTRDVTDSALLLGAVAGYDPMDSTSVNTPVPDYVAGLGKGVKGMKIGLPKQYFIEGLDPDVKRAMDEAIALYKSLGADIREVSLPNTEYAVATYYIIATAEASANLARYDGVRFGHRAENARGLAQMYSKSRAEGFGPEVKRRIMLGTYALSSGYYDAYYVKAQKVRTLIQQDFLNAFKEVDVLLTPIAPTPAFKIAEKLEDPLQMYLSDIFTIPVNLAGTCGISVPAGFSAAGLPIGLQLVGKPFGEQEILTAAYSFERETQWHLKKAPL.

Catalysis depends on charge relay system residues Lys-78 and Ser-153. The Acyl-ester intermediate role is filled by Ser-177.

It belongs to the amidase family. GatA subfamily. In terms of assembly, heterotrimer of A, B and C subunits.

It catalyses the reaction L-glutamyl-tRNA(Gln) + L-glutamine + ATP + H2O = L-glutaminyl-tRNA(Gln) + L-glutamate + ADP + phosphate + H(+). Functionally, allows the formation of correctly charged Gln-tRNA(Gln) through the transamidation of misacylated Glu-tRNA(Gln) in organisms which lack glutaminyl-tRNA synthetase. The reaction takes place in the presence of glutamine and ATP through an activated gamma-phospho-Glu-tRNA(Gln). In Geobacter sp. (strain M21), this protein is Glutamyl-tRNA(Gln) amidotransferase subunit A.